Consider the following 281-residue polypeptide: CDAN1-interacting nuclease 1 (281 aa).

Phosphothreonine is present on Thr-114.

The protein resides in the nucleus. The protein localises to the cytoplasm. In terms of biological role, plays a role in erythroid cell differentiation. This Homo sapiens (Human) protein is CDAN1-interacting nuclease 1.